We begin with the raw amino-acid sequence, 709 residues long: DNA ligase (709 aa).

NAD(+) contacts are provided by residues Asp34 to Asp38, Ser83 to Leu84, and Glu115. Lys117 functions as the N6-AMP-lysine intermediate in the catalytic mechanism. Arg138, Glu185, Lys301, and Lys325 together coordinate NAD(+). Residues Cys419, Cys422, Cys437, and Cys443 each coordinate Zn(2+). The BRCT domain occupies Arg602–Pro691. A disordered region spans residues Gly679–Glu709. Positions Glu683 to Glu694 are enriched in pro residues.

Belongs to the NAD-dependent DNA ligase family. LigA subfamily. Mg(2+) serves as cofactor. Requires Mn(2+) as cofactor.

It carries out the reaction NAD(+) + (deoxyribonucleotide)n-3'-hydroxyl + 5'-phospho-(deoxyribonucleotide)m = (deoxyribonucleotide)n+m + AMP + beta-nicotinamide D-nucleotide.. Its function is as follows. DNA ligase that catalyzes the formation of phosphodiester linkages between 5'-phosphoryl and 3'-hydroxyl groups in double-stranded DNA using NAD as a coenzyme and as the energy source for the reaction. It is essential for DNA replication and repair of damaged DNA. The chain is DNA ligase from Chloroflexus aurantiacus (strain ATCC 29364 / DSM 637 / Y-400-fl).